We begin with the raw amino-acid sequence, 286 residues long: Energy-coupling factor transporter ATP-binding protein EcfA2 (286 aa).

The ABC transporter domain maps to 3-246; the sequence is IRFDNVSYTY…KKKLADWHIG (244 aa). 40–47 contacts ATP; sequence GQTGSGKS.

The protein belongs to the ABC transporter superfamily. Energy-coupling factor EcfA family. As to quaternary structure, forms a stable energy-coupling factor (ECF) transporter complex composed of 2 membrane-embedded substrate-binding proteins (S component), 2 ATP-binding proteins (A component) and 2 transmembrane proteins (T component).

Its subcellular location is the cell membrane. Functionally, ATP-binding (A) component of a common energy-coupling factor (ECF) ABC-transporter complex. Unlike classic ABC transporters this ECF transporter provides the energy necessary to transport a number of different substrates. The polypeptide is Energy-coupling factor transporter ATP-binding protein EcfA2 (Staphylococcus aureus (strain USA300)).